A 369-amino-acid polypeptide reads, in one-letter code: Histone deacetylase-like amidohydrolase (369 aa).

His143 (proton donor/acceptor) is an active-site residue. Residues Asp180, His182, and Asp268 each coordinate Zn(2+).

This sequence belongs to the histone deacetylase family. In terms of assembly, homotetramer; dimer of dimers. The cofactor is Zn(2+).

Its activity is regulated as follows. Zinc, and cobalt and nickel at a lesser extent, are able to increase the catalytic activity (2.2-, 1.3- and 1.1-fold respectively) at concentrations of 1 mM. Higher concentrations have an inhibitory effect. Magnesium, manganese and calcium have no effect on activity at concentrations between 0 and 10 mM. At 100 mM, the catalytic activity is increased between 1.2- and 2.1-fold. Hydroxamates like TSA and SAHA inhibit the enzyme. Is also inhibited by azobenzenes, stilbenes and arylazopyrazoles. Exhibits significant levels of protein deacetylase activity comparable to those of eukaryotic HDACs in assays both with fluorogenic peptidic substrates and acetate-radiolabeled histones. Accepts proteins with epsilon-acetylated lysine residues and tritiated-acetate-prelabeled chicken histones as substrates. The natural substrate protein is not yet known. The protein is Histone deacetylase-like amidohydrolase (hdaH) of Alcaligenes sp. (strain DSM 11172) (Bordetella sp. (strain FB188)).